Here is a 261-residue protein sequence, read N- to C-terminus: Pimeloyl-[acyl-carrier protein] methyl ester esterase (261 aa).

One can recognise an AB hydrolase-1 domain in the interval 16–241; the sequence is LVLLHGWGLN…HAAHAPFISH (226 aa). Residues Trp22, 82–83, and 143–147 each bind substrate; these read SL and FLALQ. Ser82 acts as the Nucleophile in catalysis. Active-site residues include Asp207 and His235. His235 provides a ligand contact to substrate.

This sequence belongs to the AB hydrolase superfamily. Carboxylesterase BioH family. As to quaternary structure, monomer.

The protein resides in the cytoplasm. It catalyses the reaction 6-carboxyhexanoyl-[ACP] methyl ester + H2O = 6-carboxyhexanoyl-[ACP] + methanol + H(+). Its pathway is cofactor biosynthesis; biotin biosynthesis. In terms of biological role, the physiological role of BioH is to remove the methyl group introduced by BioC when the pimeloyl moiety is complete. It allows to synthesize pimeloyl-ACP via the fatty acid synthetic pathway through the hydrolysis of the ester bonds of pimeloyl-ACP esters. The chain is Pimeloyl-[acyl-carrier protein] methyl ester esterase from Photorhabdus laumondii subsp. laumondii (strain DSM 15139 / CIP 105565 / TT01) (Photorhabdus luminescens subsp. laumondii).